We begin with the raw amino-acid sequence, 432 residues long: D-amino acid dehydrogenase (432 aa).

FAD is bound at residue 3 to 17; the sequence is VVILGSGVVGVTSAW.

It belongs to the DadA oxidoreductase family. It depends on FAD as a cofactor.

The enzyme catalyses a D-alpha-amino acid + A + H2O = a 2-oxocarboxylate + AH2 + NH4(+). The protein operates within amino-acid degradation; D-alanine degradation; NH(3) and pyruvate from D-alanine: step 1/1. Functionally, oxidative deamination of D-amino acids. The protein is D-amino acid dehydrogenase of Salmonella paratyphi C (strain RKS4594).